A 310-amino-acid polypeptide reads, in one-letter code: Mitochondrial citrate transporter E (310 aa).

Solcar repeat units lie at residues 2 to 95 (STTT…LRQG), 107 to 199 (QSLG…AKRR), and 208 to 293 (DGPG…TNKI). 6 helical membrane-spanning segments follow: residues 8–28 (FIAG…FETV), 72–92 (GSAY…YEPL), 114–133 (LAGA…FFLV), 178–198 (AMVR…FAKR), 211–228 (GLHL…CCVM), and 265–286 (IYKG…TLSL).

Belongs to the mitochondrial carrier (TC 2.A.29) family.

Its subcellular location is the mitochondrion inner membrane. Mitochondrial transporter that does not mediate citrate export from mitochondria to cytoplasm. Its exact function has still to be determined. The protein is Mitochondrial citrate transporter E of Aspergillus niger (strain ATCC 1015 / CBS 113.46 / FGSC A1144 / LSHB Ac4 / NCTC 3858a / NRRL 328 / USDA 3528.7).